Here is a 471-residue protein sequence, read N- to C-terminus: F-box only protein 3 (471 aa).

The F-box domain occupies P10–H56. The ApaG domain occupies V278–V408. A compositionally biased stretch (acidic residues) spans E419–E451. The disordered stretch occupies residues E419–R455.

Part of a SCF (SKP1-cullin-F-box) protein ligase complex SCF(FBXO3) consisting of FBXO3, SKP1, CUL1 and RBX1. Interacts with PML, interaction is direct and takes place either alone or within the SCF complex. As to quaternary structure, (Microbial infection) Interacts (via ApaG domain) with Rift valley fever virus NSs helical filament; this interaction forms a filamentous E3 which mediates degradation of TFIIH complex through interaction with GT2H1.

Its subcellular location is the nucleus. The protein operates within protein modification; protein ubiquitination. Functionally, substrate recognition component of the SCF (SKP1-CUL1-F-box protein)-type E3 ubiquitin ligase complex, SCF(FBXO3), which mediates the ubiquitination and subsequent proteasomal degradation of target proteins. Mediates the ubiquitination of HIPK2 and probably that of EP300, leading to rapid degradation by the proteasome. In the presence of PML, HIPK2 ubiquitination still occurs, but degradation is prevented. PML, HIPK2 and FBXO3 may act synergically to activate p53/TP53-dependent transactivation. The SCF(FBXO3) also acts as a regulator of inflammation by mediating ubiquitination and degradation of FBXL2 in response to lipopolysaccharide (LPS). The SCF(FBXO3) complex specifically recognizes FBXL2 phosphorylated at 'Thr-404' and promotes its ubiquitination. (Microbial infection) Associates with the Rift valley fever virus NSs to form a remodeled E3 ligase that triggers efficient proteasomal degradation of targeted proteins. The filamentous E3 ligase targets the TFIIH complex leading to robust inhibition of antiviral immunity and enhances viral pathogenesis. The chain is F-box only protein 3 from Homo sapiens (Human).